A 59-amino-acid chain; its full sequence is MKVFFAVLIALFVCSMVIGIHGGVPINVKCRGSRDCLDPCKKAGMRFGKCINSKCHCTP.

The first 22 residues, 1 to 22 (MKVFFAVLIALFVCSMVIGIHG), serve as a signal peptide directing secretion. 3 cysteine pairs are disulfide-bonded: cysteine 30/cysteine 50, cysteine 36/cysteine 55, and cysteine 40/cysteine 57.

This sequence belongs to the short scorpion toxin superfamily. Potassium channel inhibitor family. Alpha-KTx 03 subfamily. In terms of tissue distribution, expressed by the venom gland.

The protein resides in the secreted. Inhibits insect potassium channel. Is at least a 100-fold more potent against the Drosophila Shaker channel than towards its mammalian homologs Kv1.1/KCNA1 and Kv1.3/KCNA3. In Buthus israelis (Israeli scorpion), this protein is Potassium channel toxin alpha-KTx 3.10.